Reading from the N-terminus, the 219-residue chain is Ras-related protein Rab-3D (219 aa).

At A2 the chain carries N-acetylalanine. 29–37 (GNSSVGKTS) provides a ligand contact to GDP. S31, S32, V33, G34, K35, T36, S37, P49, and S53 together coordinate GTP. Residue T36 participates in Mg(2+) binding. A Switch 1 motif is present at residues 49-58 (PAFVSTVGID). Mg(2+)-binding residues include T54 and D77. Position 80 (G80) interacts with GTP. The Switch 2 motif lies at 80–96 (GQERYRTITTAYYRGAM). At T86 the chain carries Phosphothreonine; by LRRK2. GTP contacts are provided by N135, K136, D138, A166, and K167. GDP-binding positions include 135 to 138 (NKCD) and 165 to 167 (SAK). S190 carries the phosphoserine modification. The segment covering 190–199 (SLEPSSSSGS) has biased composition (low complexity). The disordered stretch occupies residues 190–219 (SLEPSSSSGSNGKGPAVGDAPAPQPSSCSC). S-geranylgeranyl cysteine attachment occurs at residues C217 and C219. Residue C219 is modified to Cysteine methyl ester.

Belongs to the small GTPase superfamily. Rab family. As to quaternary structure, interacts with RIMS1, RIMS2, RPH3A, RPH3AL and RAB3IP. The GTP-bound form interacts with REP15. Interacts with CHM and CHML; phosphorylation at Thr-86 disrupts these interactions. Interacts with MADD (via uDENN domain); the GTP-bound form is preferred for interaction. Requires Mg(2+) as cofactor. In terms of processing, phosphorylation of Thr-86 in the switch II region by LRRK2 prevents the association of RAB regulatory proteins, including CHM and CHML. Highly expressed in granulocytes of peripheral blood. Constitutively expressed at low levels in all hematopoietic cell lines investigated.

The protein localises to the cell membrane. It catalyses the reaction GTP + H2O = GDP + phosphate + H(+). Its activity is regulated as follows. Regulated by guanine nucleotide exchange factors (GEFs) which promote the exchange of bound GDP for free GTP. Regulated by GTPase activating proteins (GAPs) which increase the GTP hydrolysis activity. Inhibited by GDP dissociation inhibitors (GDIs) which prevent Rab-GDP dissociation. Functionally, the small GTPases Rab are key regulators of intracellular membrane trafficking, from the formation of transport vesicles to their fusion with membranes. Rabs cycle between an inactive GDP-bound form and an active GTP-bound form that is able to recruit to membranes different sets of downstream effectors directly responsible for vesicle formation, movement, tethering and fusion. RAB3D may be involved in the insulin-induced exocytosis of GLUT4-containing vesicles in adipocytes. The chain is Ras-related protein Rab-3D from Homo sapiens (Human).